The sequence spans 355 residues: Phospho-N-acetylmuramoyl-pentapeptide-transferase (355 aa).

The next 10 helical transmembrane spans lie at 3 to 23 (GVLIAAMVALVVSLLGTPWVI), 56 to 76 (VIIVATLVGYFLAHLVTGIGF), 80 to 100 (GLLVLLVMTGLGIVGFLDDYI), 120 to 140 (AAVALAFGLLAVRFKNHAGLL), 152 to 172 (TSLTVGIIGFPLLAWIIIAAT), 185 to 205 (LAAGTSAMVFGAYVVISFWQF), 224 to 244 (PLDVALVAAAAMGACFGFLWW), 251 to 271 (IFMGDTGSLALGGAFASIAIV), 276 to 296 (LLLVVLGGLFVIETLSVMIQV), and 330 to 350 (FWIVSGLAVAFGLGLFYAEFL).

The protein belongs to the glycosyltransferase 4 family. MraY subfamily. Mg(2+) is required as a cofactor.

It is found in the cell membrane. The catalysed reaction is UDP-N-acetyl-alpha-D-muramoyl-L-alanyl-gamma-D-glutamyl-meso-2,6-diaminopimeloyl-D-alanyl-D-alanine + di-trans,octa-cis-undecaprenyl phosphate = di-trans,octa-cis-undecaprenyl diphospho-N-acetyl-alpha-D-muramoyl-L-alanyl-D-glutamyl-meso-2,6-diaminopimeloyl-D-alanyl-D-alanine + UMP. The protein operates within cell wall biogenesis; peptidoglycan biosynthesis. In terms of biological role, catalyzes the initial step of the lipid cycle reactions in the biosynthesis of the cell wall peptidoglycan: transfers peptidoglycan precursor phospho-MurNAc-pentapeptide from UDP-MurNAc-pentapeptide onto the lipid carrier undecaprenyl phosphate, yielding undecaprenyl-pyrophosphoryl-MurNAc-pentapeptide, known as lipid I. The protein is Phospho-N-acetylmuramoyl-pentapeptide-transferase of Frankia alni (strain DSM 45986 / CECT 9034 / ACN14a).